Reading from the N-terminus, the 427-residue chain is Putative B3 domain-containing protein Os04g0346900 (427 aa).

2 consecutive DNA-binding regions (TF-B3) follow at residues 25 to 118 (LVPS…FDTT) and 140 to 236 (KPQF…FGPN). The disordered stretch occupies residues 253–309 (TGEQQEAPSFSRRKCNNKKKSRFGEDDGNQQEMPCSRKGSGNKGRTSDRETKRMRKT). The segment covering 263–273 (SRRKCNNKKKS) has biased composition (basic residues). Residues 320 to 427 (WIKKEINEYV…TLWRVDIERC (108 aa)) constitute a DNA-binding region (TF-B3 3).

Its subcellular location is the nucleus. The polypeptide is Putative B3 domain-containing protein Os04g0346900 (Oryza sativa subsp. japonica (Rice)).